Here is a 63-residue protein sequence, read N- to C-terminus: Bowman-Birk type proteinase inhibitor B-II (63 aa).

7 disulfide bridges follow: Cys5–Cys62, Cys6–Cys23, Cys9–Cys57, Cys11–Cys21, Cys30–Cys37, Cys34–Cys49, and Cys39–Cys47.

Belongs to the Bowman-Birk serine protease inhibitor family.

This Arachis hypogaea (Peanut) protein is Bowman-Birk type proteinase inhibitor B-II.